The chain runs to 100 residues: Nucleoid-associated protein Cagg_3200 (100 aa).

The protein belongs to the YbaB/EbfC family. In terms of assembly, homodimer.

The protein resides in the cytoplasm. Its subcellular location is the nucleoid. Binds to DNA and alters its conformation. May be involved in regulation of gene expression, nucleoid organization and DNA protection. The sequence is that of Nucleoid-associated protein Cagg_3200 from Chloroflexus aggregans (strain MD-66 / DSM 9485).